A 309-amino-acid polypeptide reads, in one-letter code: MQTKPFRIGTRGSPLAMAQTHETRDRLAAAHGLPPEMFEIVILSTKGDRITDRSLAEIGGKGLFTEELEQQLLSGDLDFAVHSSKDMPTKLPEGLFLSAFLPREDIRDAFVGRSAKRLVDLPQGATVGSSSLRRQALIRRLRPDIDVITYRGQVETRLRKLAEGQVDGTLLAYAGLRRLGMEHVPTELLDPEEFPPAPAQGAICVEARIGDDRINTLLAAIDDPRTHEAVSCERGFLATLDGSCRTPIAGYAQSDGTHIRFAGMILTPDGTTSHQIEIDGRAADAERLGQEAGERIRAKAGPGFFSSWS.

The residue at position 244 (Cys244) is an S-(dipyrrolylmethanemethyl)cysteine.

The protein belongs to the HMBS family. As to quaternary structure, monomer. Requires dipyrromethane as cofactor.

It carries out the reaction 4 porphobilinogen + H2O = hydroxymethylbilane + 4 NH4(+). It functions in the pathway porphyrin-containing compound metabolism; protoporphyrin-IX biosynthesis; coproporphyrinogen-III from 5-aminolevulinate: step 2/4. In terms of biological role, tetrapolymerization of the monopyrrole PBG into the hydroxymethylbilane pre-uroporphyrinogen in several discrete steps. This Rhizobium meliloti (strain 1021) (Ensifer meliloti) protein is Porphobilinogen deaminase.